A 343-amino-acid polypeptide reads, in one-letter code: Uroporphyrinogen decarboxylase (343 aa).

Substrate contacts are provided by residues 23–27, Asp-73, Tyr-150, Ser-205, and His-322; that span reads RQAGR.

It belongs to the uroporphyrinogen decarboxylase family. Homodimer.

Its subcellular location is the cytoplasm. It carries out the reaction uroporphyrinogen III + 4 H(+) = coproporphyrinogen III + 4 CO2. It participates in porphyrin-containing compound metabolism; protoporphyrin-IX biosynthesis; coproporphyrinogen-III from 5-aminolevulinate: step 4/4. In terms of biological role, catalyzes the decarboxylation of four acetate groups of uroporphyrinogen-III to yield coproporphyrinogen-III. This is Uroporphyrinogen decarboxylase from Cereibacter sphaeroides (strain ATCC 17025 / ATH 2.4.3) (Rhodobacter sphaeroides).